Here is a 787-residue protein sequence, read N- to C-terminus: LPS-assembly protein LptD (787 aa).

The first 39 residues, 1–39 (MPPKTLFPLVPACDAAPRKKRLAVALLAVPGLVPAVSQA), serve as a signal peptide directing secretion.

This sequence belongs to the LptD family. Component of the lipopolysaccharide transport and assembly complex. Interacts with LptE and LptA.

It is found in the cell outer membrane. Functionally, together with LptE, is involved in the assembly of lipopolysaccharide (LPS) at the surface of the outer membrane. In Burkholderia pseudomallei (strain 1710b), this protein is LPS-assembly protein LptD.